Reading from the N-terminus, the 2091-residue chain is Protein Ycf2 (2091 aa).

Residues 191-210 (DSSQLKGSSDQSRDPLDSIS) form a disordered region. 1432–1439 (GSIGTGRS) is a binding site for ATP.

This sequence belongs to the Ycf2 family.

It localises to the plastid. The protein localises to the chloroplast stroma. Probable ATPase of unknown function. Its presence in a non-photosynthetic plant (Epifagus virginiana) and experiments in tobacco indicate that it has an essential function which is probably not related to photosynthesis. The protein is Protein Ycf2 of Daucus carota (Wild carrot).